The sequence spans 318 residues: Death effector domain-containing protein (318 aa).

The DED domain maps to 25–103 (SLHRMFDIVG…RHDLLPYVTL (79 aa)). Residues 128–191 (PRALSDPEPR…SVTPDPKEKQ (64 aa)) form a disordered region.

As to quaternary structure, interacts with CASP8, CASP10, KRT8, KRT18, CASP3 and FADD. Homodimerizes and heterodimerizes with DEDD2. Exists predominantly in a mono- or diubiquitinated form. In terms of tissue distribution, widely expressed with highest levels in testis. Within the testis, highly expressed in germ cells but not expressed in Sertoli cells.

Its subcellular location is the cytoplasm. It is found in the nucleus. The protein localises to the nucleolus. In terms of biological role, a scaffold protein that directs CASP3 to certain substrates and facilitates their ordered degradation during apoptosis. May also play a role in mediating CASP3 cleavage of KRT18. Regulates degradation of intermediate filaments during apoptosis. May play a role in the general transcription machinery in the nucleus and might be an important regulator of the activity of GTF3C3. Inhibits DNA transcription in vitro. This Rattus norvegicus (Rat) protein is Death effector domain-containing protein (Dedd).